Here is a 129-residue protein sequence, read N- to C-terminus: Flagellar assembly factor FliW 2 (129 aa).

The protein belongs to the FliW family. Interacts with translational regulator CsrA and flagellin(s).

The protein resides in the cytoplasm. In terms of biological role, acts as an anti-CsrA protein, binds CsrA and prevents it from repressing translation of its target genes, one of which is flagellin. Binds to flagellin and participates in the assembly of the flagellum. This Helicobacter pylori (strain HPAG1) protein is Flagellar assembly factor FliW 2.